Consider the following 453-residue polypeptide: MSFDLIIKNGTVILENEARVVDIAVKGGKIAAIGQDLGDAKEVMDASGLVVSPGMVDAHTHISEPGRSHWEGYETGTRAAAKGGITTMIEMPLNQLPATVDRASIELKFDAAKGKLTIDAAQLGGLVSYNIDRLHELDEVGVVGFKCFVATCGDRGIDNDFRDVNDWQFFKGAQKLGELGQPVLVHCENALICDALGEEAKSEGRVTAHDYVASRPVFTEVEAIRRVLYLAKVAGCRLHICHISSPEGVEEVTRARQEGQDVTCESCPHYFVLDTDQFEEIGTLAKCSPPIRDLENQKGMWEKLFNGEIDCLVSDHSPCPPEMKAGNIMEAWGGIAGLQNCMDVMFDEAVQKRGMSLPMFGKLMATNAADIFGLQQKGRIAPGKDAEFVFIQPNSSYVLTNDDLEYRHKVSPYVGRTIGARITKTILRGDVIYDIEQGFPVAPKGQFILKHQQ.

Positions 59, 61, 146, 186, 242, and 315 each coordinate Zn(2+). Residue lysine 146 is modified to N6-carboxylysine.

It belongs to the metallo-dependent hydrolases superfamily. Allantoinase family. As to quaternary structure, homotetramer. Zn(2+) is required as a cofactor. In terms of processing, carboxylation allows a single lysine to coordinate two zinc ions.

The catalysed reaction is (S)-allantoin + H2O = allantoate + H(+). Its pathway is nitrogen metabolism; (S)-allantoin degradation; allantoate from (S)-allantoin: step 1/1. In terms of biological role, catalyzes the conversion of allantoin (5-ureidohydantoin) to allantoic acid by hydrolytic cleavage of the five-member hydantoin ring. This is Allantoinase from Escherichia coli O9:H4 (strain HS).